The sequence spans 324 residues: HPr kinase/phosphorylase (324 aa).

Active-site residues include His-146 and Lys-167. 161-168 (GDSGLGKS) lines the ATP pocket. A Mg(2+)-binding site is contributed by Ser-168. Asp-185 functions as the Proton acceptor; for phosphorylation activity. Proton donor; for dephosphorylation activity in the catalytic mechanism. The segment at 209–218 (LEVRGLGLLD) is important for the catalytic mechanism of both phosphorylation and dephosphorylation. Position 210 (Glu-210) interacts with Mg(2+). The active site involves Arg-250. Residues 271 to 276 (QVAAGR) form an important for the catalytic mechanism of dephosphorylation region.

This sequence belongs to the HPrK/P family. Homohexamer. Requires Mg(2+) as cofactor.

It catalyses the reaction [HPr protein]-L-serine + ATP = [HPr protein]-O-phospho-L-serine + ADP + H(+). The catalysed reaction is [HPr protein]-O-phospho-L-serine + phosphate + H(+) = [HPr protein]-L-serine + diphosphate. In terms of biological role, catalyzes the ATP- as well as the pyrophosphate-dependent phosphorylation of a specific serine residue in HPr, a phosphocarrier protein of the phosphoenolpyruvate-dependent sugar phosphotransferase system (PTS). HprK/P also catalyzes the pyrophosphate-producing, inorganic phosphate-dependent dephosphorylation (phosphorolysis) of seryl-phosphorylated HPr (P-Ser-HPr). The polypeptide is HPr kinase/phosphorylase (Ralstonia pickettii (strain 12J)).